The following is a 309-amino-acid chain: Dicarboxylate carrier UCP2 (309 aa).

Topologically, residues 1 to 16 (MVGFKATDVPPTATVK) are mitochondrial intermembrane. Solcar repeat units follow at residues 11-106 (PTAT…VKQF), 114-203 (ASIG…IKDA), and 212-297 (DDLP…LKRA). The tract at residues 16–63 (KFLGAGTAACIADLITFPLDTAKVRLQIQGESQGPVHATASAQYRGVM) is important for interaction with long-chain fatty acids. The chain crosses the membrane as a helical span at residues 17-40 (FLGAGTAACIADLITFPLDTAKVR). The Mitochondrial matrix segment spans residues 41 to 77 (LQIQGESQGPVHATASAQYRGVMGTILTMVRTEGPRS). The chain crosses the membrane as a helical span at residues 78-103 (LYNGLVAGLQRQMSFASVRIGLYDSV). The Mitochondrial intermembrane segment spans residues 104-119 (KQFYTKGSEHASIGSR). The helical transmembrane segment at 120-145 (LLAGSTTGALAVAVAQPTDVVKVRFQ) threads the bilayer. The Mitochondrial matrix portion of the chain corresponds to 146–173 (AQARAGGGRRYQSTVNAYKTIAREEGFR). A helical transmembrane segment spans residues 174-199 (GLWKGTSPNVARNAIVNCAELVTYDL). Over 200–217 (IKDALLKANLMTDDLPCH) the chain is Mitochondrial intermembrane. A helical transmembrane segment spans residues 218-242 (FTSAFGAGFCTTVIASPVDVVKTRY). The Mitochondrial matrix segment spans residues 243 to 268 (MNSALGQYSSAGHCALTMLQKEGPRA). Residues 269–294 (FYKGFMPSFLRLGSWNVVMFVTYEQL) form a helical membrane-spanning segment. Residues 278–285 (LRLGSWNV) are important for interaction with long-chain fatty acids. The Mitochondrial intermembrane segment spans residues 295–309 (KRALMAACTSREAPF).

The protein belongs to the mitochondrial carrier (TC 2.A.29) family. Homotetramer. Adopts an asymmetrical dimer of dimers functional form. Interacts with MICU1 (when methylated); leading to decrease the calcium sensitivity of MICU1.

The protein localises to the mitochondrion inner membrane. The enzyme catalyses L-aspartate(out) + phosphate(in) + H(+)(in) = L-aspartate(in) + phosphate(out) + H(+)(out). It carries out the reaction oxaloacetate(out) + phosphate(in) + H(+)(in) = oxaloacetate(in) + phosphate(out) + H(+)(out). The catalysed reaction is (S)-malate(out) + phosphate(in) + H(+)(in) = (S)-malate(in) + phosphate(out) + H(+)(out). It catalyses the reaction malonate(out) + phosphate(in) + H(+)(in) = malonate(in) + phosphate(out) + H(+)(out). The enzyme catalyses sulfate(out) + phosphate(in) + H(+)(in) = sulfate(in) + phosphate(out) + H(+)(out). It carries out the reaction (S)-malate(out) = (S)-malate(in). The catalysed reaction is L-aspartate(out) = L-aspartate(in). It catalyses the reaction phosphate(in) = phosphate(out). The enzyme catalyses chloride(in) = chloride(out). It carries out the reaction H(+)(in) = H(+)(out). The catalysed reaction is a long-chain fatty acid(out) = a long-chain fatty acid(in). Functionally, antiporter that exports dicarboxylate intermediates of the Krebs cycle in exchange for phosphate plus a proton across the inner membrane of mitochondria, a process driven by mitochondrial motive force with an overall impact on glycolysis, glutaminolysis and glutathione-dependent redox balance. Continuous export of oxaloacetate and related four-carbon dicarboxylates from mitochondrial matrix into the cytosol negatively regulates the oxidation of acetyl-CoA substrates via the Krebs cycle lowering the ATP/ADP ratio and reactive oxygen species (ROS) production. May mediate inducible proton entry into the mitochondrial matrix affecting ATP turnover as a protection mechanism against oxidative stress. The proton currents are most likely associated with fatty acid flipping across the inner membrane of mitochondria in a metabolic process regulated by free fatty acids and purine nucleotides. Regulates the use of glucose as a source of energy. Required for glucose-induced DRP1-dependent mitochondrial fission and neuron activation in the ventromedial nucleus of the hypothalamus (VMH). This mitochondrial adaptation mechanism modulates the VMH pool of glucose-excited neurons with an impact on systemic glucose homeostasis. Regulates ROS levels and metabolic reprogramming of macrophages during the resolution phase of inflammation. Attenuates ROS production in response to IL33 to preserve the integrity of the Krebs cycle required for persistent production of itaconate and subsequent GATA3-dependent differentiation of inflammation-resolving alternatively activated macrophages. Can unidirectionally transport anions including L-malate, L-aspartate, phosphate and chloride ions. Does not mediate adaptive thermogenesis. The chain is Dicarboxylate carrier UCP2 (UCP2) from Pongo abelii (Sumatran orangutan).